A 454-amino-acid polypeptide reads, in one-letter code: Growth/differentiation factor 9 (454 aa).

The N-terminal stretch at 1–24 (MARPNKFLLWFCCFAWLCFPISLG) is a signal peptide. Positions 25–319 (SQASGGEAQI…GRSSHHRHRR (295 aa)) are excised as a propeptide. 5 N-linked (GlcNAc...) asparagine glycosylation sites follow: Asn106, Asn163, Asn236, Asn255, and Asn268. Residues 303–330 (GEEAAEDGRSSHHRHRRGQETVSSELKK) are disordered. At Ser325 the chain carries Phosphoserine; by CK. Asn338 is a glycosylation site (N-linked (GlcNAc...) asparagine). 3 disulfides stabilise this stretch: Cys353–Cys419, Cys382–Cys451, and Cys386–Cys453.

This sequence belongs to the TGF-beta family. Homodimer or heterodimer (Potential). But, in contrast to other members of this family, cannot be disulfide-linked. In terms of processing, phosphorylated; phosphorylation is critical for GDF9 function. In vitro, can be phosphorylated by CK at Ser-325. As to expression, expressed in ovarian granulosa cells. Present in oocytes of primary follicles (at protein level).

The protein localises to the secreted. Its function is as follows. Required for ovarian folliculogenesis. Promotes primordial follicle development. Stimulates granulosa cell proliferation. Promotes cell transition from G0/G1 to S and G2/M phases, through an increase of CCND1 and CCNE1 expression, and RB1 phosphorylation. It regulates STAR expression and cAMP-dependent progesterone release in granulosa and thecal cells. Attenuates the suppressive effects of activin A on STAR expression and progesterone production by increasing the expression of inhibin B. It suppresses FST and FSTL3 production in granulosa-lutein cells. The protein is Growth/differentiation factor 9 (GDF9) of Homo sapiens (Human).